Reading from the N-terminus, the 871-residue chain is Probable LRR receptor-like serine/threonine-protein kinase At1g51810 (871 aa).

An N-terminal signal peptide occupies residues 1–20; it reads MERHCLFFVIFSLILHLVQA. Residues 21–512 lie on the Extracellular side of the membrane; the sequence is QDPIGFINLD…GRQIKSMTIP (492 aa). 11 N-linked (GlcNAc...) asparagine glycosylation sites follow: Asn-93, Asn-179, Asn-229, Asn-283, Asn-295, Asn-396, Asn-410, Asn-439, Asn-458, Asn-463, and Asn-489. LRR repeat units lie at residues 405–426, 429–449, and 453–474; these read IITSLNLSSSGLTGIIVLTIQN, NLQELDLSNNNLSGGVPEFLA, and SLLVINLSGNNLSGVVPQKLIE. Residues 513–533 traverse the membrane as a helical segment; it reads IVASIGSVVAFTVALMIFCVV. The Cytoplasmic portion of the chain corresponds to 534-871; that stretch reads RKNNPSNDEA…FGTEVAPMAR (338 aa). At Thr-568 the chain carries Phosphothreonine. The Protein kinase domain maps to 577 to 850; that stretch reads NNFQKILGKG…QVVFELKECL (274 aa). ATP is bound by residues 583 to 591 and Lys-605; that span reads LGKGGFGIV. Tyr-650 carries the phosphotyrosine modification. Asp-702 (proton acceptor) is an active-site residue. Ser-736 carries the post-translational modification Phosphoserine. Residues Thr-737 and Thr-742 each carry the phosphothreonine modification. Residue Tyr-750 is modified to Phosphotyrosine.

The protein belongs to the protein kinase superfamily. Ser/Thr protein kinase family.

Its subcellular location is the membrane. The enzyme catalyses L-seryl-[protein] + ATP = O-phospho-L-seryl-[protein] + ADP + H(+). The catalysed reaction is L-threonyl-[protein] + ATP = O-phospho-L-threonyl-[protein] + ADP + H(+). The sequence is that of Probable LRR receptor-like serine/threonine-protein kinase At1g51810 from Arabidopsis thaliana (Mouse-ear cress).